The sequence spans 359 residues: UPF0496 protein At3g57100 (359 aa).

A coiled-coil region spans residues 179–208 (HEELAKMVVKLEKTMKDIDKKLRRVRGRRA). The chain crosses the membrane as a helical span at residues 214 to 234 (LLAPVIAVIFLSKLVAGLVPI).

This sequence belongs to the UPF0496 family.

The protein resides in the membrane. The sequence is that of UPF0496 protein At3g57100 from Arabidopsis thaliana (Mouse-ear cress).